Consider the following 106-residue polypeptide: Large ribosomal subunit protein uL23 (106 aa).

Belongs to the universal ribosomal protein uL23 family. Part of the 50S ribosomal subunit. Contacts protein L29, and trigger factor when it is bound to the ribosome.

One of the early assembly proteins it binds 23S rRNA. One of the proteins that surrounds the polypeptide exit tunnel on the outside of the ribosome. Forms the main docking site for trigger factor binding to the ribosome. This chain is Large ribosomal subunit protein uL23, found in Acinetobacter baumannii (strain AB307-0294).